The following is a 387-amino-acid chain: Probable WRKY transcription factor 36 (387 aa).

The WRKY DNA-binding region spans 197-264 (CEDPSINDGC…YEGNHDHPLP (68 aa)). Positions 322–366 (RPNYPNQLPDDYPLSSSSFSLNFSSPDPPPPSSHDHTLNFSGLRT) are disordered. Low complexity predominate over residues 329 to 346 (LPDDYPLSSSSFSLNFSS).

It is found in the nucleus. Functionally, transcription factor. Interacts specifically with the W box (5'-(T)TGAC[CT]-3'), a frequently occurring elicitor-responsive cis-acting element. In Arabidopsis thaliana (Mouse-ear cress), this protein is Probable WRKY transcription factor 36 (WRKY36).